The sequence spans 614 residues: RNA polymerase sigma factor RpoD (614 aa).

Residues 168-245 (DPDDNIAAPT…PEEKRSYPQG (78 aa)) form a disordered region. Positions 193-209 (EADDDEEESEGGDDEEE) are enriched in acidic residues. Polar residues predominate over residues 215 to 232 (TRSSQPSVSVRYPSSFSD). The segment at 380-450 (MVEANLRLVI…TRSIADQART (71 aa)) is sigma-70 factor domain-2. An Interaction with polymerase core subunit RpoC motif is present at residues 404-407 (DLIQ). The tract at residues 459–535 (ETINKLNRIS…DSTMQSPIYV (77 aa)) is sigma-70 factor domain-3. The sigma-70 factor domain-4 stretch occupies residues 548 to 601 (VLSGLTAREAKVLRMRFGIDMNTDHTLEEVGKQFDVTRERIRQIEAKAWRKLRH). Positions 574–593 (LEEVGKQFDVTRERIRQIEA) form a DNA-binding region, H-T-H motif.

The protein belongs to the sigma-70 factor family. RpoD/SigA subfamily. In terms of assembly, interacts transiently with the RNA polymerase catalytic core.

Its subcellular location is the cytoplasm. Sigma factors are initiation factors that promote the attachment of RNA polymerase to specific initiation sites and are then released. This sigma factor is the primary sigma factor during exponential growth. The chain is RNA polymerase sigma factor RpoD from Pseudomonas putida (Arthrobacter siderocapsulatus).